Here is a 470-residue protein sequence, read N- to C-terminus: Iron-sulfur cluster assembly SufBD family protein ABCI9 (470 aa).

It belongs to the iron-sulfur cluster assembly SufBD family.

This chain is Iron-sulfur cluster assembly SufBD family protein ABCI9 (ABCI9), found in Arabidopsis thaliana (Mouse-ear cress).